A 126-amino-acid polypeptide reads, in one-letter code: Spermidine export protein MdtJ (126 aa).

Transmembrane regions (helical) follow at residues 1–21, 30–50, 54–74, and 81–101; these read MIYWIFLALAITAEVIGTLSM, ITGHIVMYIMITASYILLSLA, VALGVAYALWEGIGILFITLF, and EPFSLTKLAGLAILVIGIVML.

Belongs to the drug/metabolite transporter (DMT) superfamily. Small multidrug resistance (SMR) (TC 2.A.7.1) family. MdtJ subfamily. As to quaternary structure, forms a complex with MdtI.

It is found in the cell inner membrane. Its function is as follows. Catalyzes the excretion of spermidine. This Sodalis glossinidius (strain morsitans) protein is Spermidine export protein MdtJ.